Reading from the N-terminus, the 357-residue chain is Protein RecA (357 aa).

74–81 (GPESSGKT) lines the ATP pocket.

This sequence belongs to the RecA family.

It is found in the cytoplasm. Its function is as follows. Can catalyze the hydrolysis of ATP in the presence of single-stranded DNA, the ATP-dependent uptake of single-stranded DNA by duplex DNA, and the ATP-dependent hybridization of homologous single-stranded DNAs. It interacts with LexA causing its activation and leading to its autocatalytic cleavage. The chain is Protein RecA from Bordetella petrii (strain ATCC BAA-461 / DSM 12804 / CCUG 43448).